The sequence spans 241 residues: Uridylate kinase (241 aa).

9–10 provides a ligand contact to ATP; that stretch reads GS. G44 contributes to the UMP binding site. 2 residues coordinate ATP: G45 and R49. UMP contacts are provided by residues D66 and 114–120; that span reads IMPGQTT. ATP is bound by residues T140, Y146, and D149.

It belongs to the UMP kinase family. Homohexamer.

It localises to the cytoplasm. The catalysed reaction is UMP + ATP = UDP + ADP. The protein operates within pyrimidine metabolism; CTP biosynthesis via de novo pathway; UDP from UMP (UMPK route): step 1/1. With respect to regulation, inhibited by UTP. Catalyzes the reversible phosphorylation of UMP to UDP. In Haloquadratum walsbyi (strain DSM 16790 / HBSQ001), this protein is Uridylate kinase.